Consider the following 588-residue polypeptide: Probable G-protein coupled receptor 162 (588 aa).

At 1–17 the chain is on the extracellular side; the sequence is MARGGAGAEEASLRSNA. Residues 18 to 38 traverse the membrane as a helical segment; it reads LSWLACGLLALLANAWIILSI. Over 39–49 the chain is Cytoplasmic; the sequence is SAKQQKHKPLE. A helical membrane pass occupies residues 50–70; the sequence is LLLCFLAGTHILMAAVPLTTF. Topologically, residues 71–91 are extracellular; it reads AVVQLRRQASSDYDWNESICK. Asparagine 86 carries N-linked (GlcNAc...) asparagine glycosylation. Residues 92 to 112 traverse the membrane as a helical segment; it reads VFVSTYYTLALATCFTVASLS. Residues 113 to 133 lie on the Cytoplasmic side of the membrane; that stretch reads YHRMWMVRWPVNYRLSNAKKQ. The chain crosses the membrane as a helical span at residues 134–154; the sequence is ALHAVMGIWMVSFILSTLPSI. The Extracellular segment spans residues 155-174; it reads GWHNNGERYYARGCQFIVSK. The helical transmembrane segment at 175 to 195 threads the bilayer; the sequence is IGLGFGVCFSLLLLGGIVMGL. Residues 196 to 275 are Cytoplasmic-facing; sequence VCVAITFYQT…SLQVTNLVSA (80 aa). Residues 276-296 traverse the membrane as a helical segment; the sequence is IVFLYDSLTGVPILVVSFFSL. Over 297–303 the chain is Extracellular; the sequence is KSDSAPP. Residues 304 to 324 traverse the membrane as a helical segment; it reads WMVLAVLWCSMAQTLLLPSFI. Over 325–588 the chain is Cytoplasmic; the sequence is WSCERYRADV…GNPIFPQLTL (264 aa). Serine 413 and serine 435 each carry phosphoserine. Disordered regions lie at residues 445 to 474 and 511 to 550; these read QSRALGGPPEYLGQRHRLEDEEDEEEAEGG and ETPLPSPTASPGHSPRRPRPLGLSPRRLSLGSPESRAVGL. Residues 530-546 are compositionally biased toward low complexity; that stretch reads PLGLSPRRLSLGSPESR.

It belongs to the G-protein coupled receptor 1 family.

It localises to the cell membrane. Orphan receptor. In Homo sapiens (Human), this protein is Probable G-protein coupled receptor 162 (GPR162).